A 435-amino-acid polypeptide reads, in one-letter code: Trigger factor (435 aa).

One can recognise a PPIase FKBP-type domain in the interval 161–246 (GKRVSIDFVG…VNKVEARELP (86 aa)).

This sequence belongs to the FKBP-type PPIase family. Tig subfamily.

It is found in the cytoplasm. It carries out the reaction [protein]-peptidylproline (omega=180) = [protein]-peptidylproline (omega=0). Involved in protein export. Acts as a chaperone by maintaining the newly synthesized protein in an open conformation. Functions as a peptidyl-prolyl cis-trans isomerase. This is Trigger factor from Vibrio campbellii (strain ATCC BAA-1116).